Here is a 346-residue protein sequence, read N- to C-terminus: Biotin synthase (346 aa).

Residues 38 to 256 (RQVQVSTLLS…IAVARIMMPT (219 aa)) form the Radical SAM core domain. Residues Cys53, Cys57, and Cys60 each contribute to the [4Fe-4S] cluster site. [2Fe-2S] cluster is bound by residues Cys97, Cys128, Cys188, and Arg260.

The protein belongs to the radical SAM superfamily. Biotin synthase family. Homodimer. Requires [4Fe-4S] cluster as cofactor. [2Fe-2S] cluster is required as a cofactor.

It carries out the reaction (4R,5S)-dethiobiotin + (sulfur carrier)-SH + 2 reduced [2Fe-2S]-[ferredoxin] + 2 S-adenosyl-L-methionine = (sulfur carrier)-H + biotin + 2 5'-deoxyadenosine + 2 L-methionine + 2 oxidized [2Fe-2S]-[ferredoxin]. Its pathway is cofactor biosynthesis; biotin biosynthesis; biotin from 7,8-diaminononanoate: step 2/2. Catalyzes the conversion of dethiobiotin (DTB) to biotin by the insertion of a sulfur atom into dethiobiotin via a radical-based mechanism. In Cronobacter sakazakii (strain ATCC BAA-894) (Enterobacter sakazakii), this protein is Biotin synthase.